Consider the following 238-residue polypeptide: Sugar fermentation stimulation protein homolog (238 aa).

Belongs to the SfsA family.

This is Sugar fermentation stimulation protein homolog from Klebsiella pneumoniae subsp. pneumoniae (strain ATCC 700721 / MGH 78578).